Reading from the N-terminus, the 859-residue chain is Active breakpoint cluster region-related protein (859 aa).

Residues 31-84 (AEGHEEQKGPPEGSETMPYIDESPTMSPQLSARSQGGGESISPTPPEGLAPGVE) are disordered. Polar residues predominate over residues 54 to 64 (PTMSPQLSARS). S57 carries the phosphoserine modification. One can recognise a DH domain in the interval 91–284 (MRKLVLSGFL…QNFLSSINED (194 aa)). The 159-residue stretch at 301–459 (QLVKDGFLVE…WREAIQKLQK (159 aa)) folds into the PH domain. Positions 484-613 (TVHNIPVTSN…ESKNWHTDVI (130 aa)) constitute a C2 domain. One can recognise a Rho-GAP domain in the interval 647 to 845 (VKISVVTKRE…YYLQHPPISF (199 aa)).

Interacts with DLG4. Expressed in brain, including the cortex, hippocampus, cerebellum, and brainstem, as well as the spinal cord (at protein level).

Its subcellular location is the cell projection. It localises to the dendritic spine. The protein localises to the axon. The protein resides in the synapse. In terms of biological role, protein with a unique structure having two opposing regulatory activities toward small GTP-binding proteins. The C-terminus is a GTPase-activating protein domain which stimulates GTP hydrolysis by RAC1, RAC2 and CDC42. Accelerates the intrinsic rate of GTP hydrolysis of RAC1 or CDC42, leading to down-regulation of the active GTP-bound form. The central Dbl homology (DH) domain functions as guanine nucleotide exchange factor (GEF) that modulates the GTPases CDC42, RHOA and RAC1. Promotes the conversion of CDC42, RHOA and RAC1 from the GDP-bound to the GTP-bound form. Functions as an important negative regulator of neuronal RAC1 activity. Regulates macrophage functions such as CSF-1 directed motility and phagocytosis through the modulation of RAC1 activity. The sequence is that of Active breakpoint cluster region-related protein from Rattus norvegicus (Rat).